The following is a 183-amino-acid chain: Dual-action ribosomal maturation protein DarP (183 aa).

Belongs to the DarP family.

It localises to the cytoplasm. Member of a network of 50S ribosomal subunit biogenesis factors which assembles along the 30S-50S interface, preventing incorrect 23S rRNA structures from forming. Promotes peptidyl transferase center (PTC) maturation. This Citrobacter koseri (strain ATCC BAA-895 / CDC 4225-83 / SGSC4696) protein is Dual-action ribosomal maturation protein DarP.